We begin with the raw amino-acid sequence, 495 residues long: Glutamate--tRNA ligase (495 aa).

A 'HIGH' region motif is present at residues 13 to 23; sequence PSPTGTPHVGL. Residues 257–261 carry the 'KMSKS' region motif; it reads KLSKR. Lysine 260 is a binding site for ATP.

This sequence belongs to the class-I aminoacyl-tRNA synthetase family. Glutamate--tRNA ligase type 1 subfamily. Monomer.

It localises to the cytoplasm. The catalysed reaction is tRNA(Glu) + L-glutamate + ATP = L-glutamyl-tRNA(Glu) + AMP + diphosphate. Its function is as follows. Catalyzes the attachment of glutamate to tRNA(Glu) in a two-step reaction: glutamate is first activated by ATP to form Glu-AMP and then transferred to the acceptor end of tRNA(Glu). This chain is Glutamate--tRNA ligase, found in Mycolicibacterium vanbaalenii (strain DSM 7251 / JCM 13017 / BCRC 16820 / KCTC 9966 / NRRL B-24157 / PYR-1) (Mycobacterium vanbaalenii).